Consider the following 155-residue polypeptide: Small ribosomal subunit protein uS7cz/uS7cy (155 aa).

It belongs to the universal ribosomal protein uS7 family. As to quaternary structure, part of the 30S ribosomal subunit.

Its subcellular location is the plastid. The protein resides in the chloroplast. Functionally, one of the primary rRNA binding proteins, it binds directly to 16S rRNA where it nucleates assembly of the head domain of the 30S subunit. The chain is Small ribosomal subunit protein uS7cz/uS7cy (rps7-A) from Amborella trichopoda.